The primary structure comprises 156 residues: Cyanate hydratase (156 aa).

Active-site residues include R96, E99, and S122.

The protein belongs to the cyanase family.

It catalyses the reaction cyanate + hydrogencarbonate + 3 H(+) = NH4(+) + 2 CO2. Its function is as follows. Catalyzes the reaction of cyanate with bicarbonate to produce ammonia and carbon dioxide. This is Cyanate hydratase from Escherichia coli (strain ATCC 8739 / DSM 1576 / NBRC 3972 / NCIMB 8545 / WDCM 00012 / Crooks).